The chain runs to 330 residues: D-xylose-binding periplasmic protein (330 aa).

The first 23 residues, Met1–Ala23, serve as a signal peptide directing secretion.

The protein belongs to the bacterial solute-binding protein 2 family.

It is found in the periplasm. Involved in the high-affinity D-xylose membrane transport system. Binds with high affinity to xylose. The sequence is that of D-xylose-binding periplasmic protein (xylF) from Escherichia coli (strain K12).